We begin with the raw amino-acid sequence, 97 residues long: Peptide Y (97 aa).

Positions 1–28 (MANMLRSWMMLAALAVCLLVCLSSFADA) are cleaved as a signal peptide. Tyr64 bears the Tyrosine amide mark. Residues 68–97 (STPEQAVAWLLFGADSSQDAEPRLDYSDQW) constitute a propeptide, C-terminal extension.

The protein belongs to the NPY family.

Its subcellular location is the secreted. The chain is Peptide Y from Dicentrarchus labrax (European seabass).